A 1030-amino-acid polypeptide reads, in one-letter code: Peroxisomal ATPase PEX6 (1030 aa).

Residues 478–683 (VLLHSTTNNV…VETARMTATA (206 aa)) form an AAA-cassette D1 region. The tract at residues 767 to 956 (GILFYGPPGT…CSDAMLNAMS (190 aa)) is AAA-cassette D2. 772–779 (GPPGTGKT) lines the ATP pocket.

It belongs to the AAA ATPase family. Interacts with PEX1; forming the PEX1-PEX6 AAA ATPase complex, which is composed of a heterohexamer formed by a trimer of PEX1-PEX6 dimers. Interacts with PEX15; anchors PEX1-PEX6 heterooligomers to the peroxisomal membrane and mediates their association with the peroxisomal importomer. Interacts with UBP15.

It is found in the cytoplasm. The protein localises to the cytosol. The protein resides in the peroxisome membrane. It catalyses the reaction ATP + H2O = ADP + phosphate + H(+). In terms of biological role, component of the PEX1-PEX6 AAA ATPase complex, a protein dislocase complex that mediates the ATP-dependent extraction of the PEX5 receptor from peroxisomal membranes, an essential step for PEX5 recycling. Specifically recognizes PEX5 monoubiquitinated at 'Cys-6', and pulls it out of the peroxisome lumen through the PEX2-PEX10-PEX12 retrotranslocation channel. Extraction by the PEX1-PEX6 AAA ATPase complex is accompanied by unfolding of the TPR repeats and release of bound cargo from PEX5. The protein is Peroxisomal ATPase PEX6 of Saccharomyces cerevisiae (strain ATCC 204508 / S288c) (Baker's yeast).